A 158-amino-acid polypeptide reads, in one-letter code: Immunoglobulin J chain (158 aa).

The first 22 residues, 1 to 22 (MKNHLFFWGVLAIFVQAVLVTA), serve as a signal peptide directing secretion. 3 cysteine pairs are disulfide-bonded: cysteine 36–cysteine 122, cysteine 95–cysteine 115, and cysteine 130–cysteine 155. An N-linked (GlcNAc...) (complex) asparagine glycan is attached at asparagine 72.

As to quaternary structure, part of the secretory IgA (sIgA) complex that consists of two, four or five IgA monomers, and two additional non-Ig polypeptides, namely the JCHAIN and the secretory component (the proteolytic product of PIGR). Part of the secretory IgM (sIgM) complex that consist of five IgM monomers, and two additional non-Ig polypeptides, namely the JCHAIN and the secretory component (the proteolytic product of PIGR). JCHAIN-containing IgM interacts (via CH4 domain) with FCRM (via Ig-like domain). In terms of processing, N-glycosylated. N-glycans attached to Asn-72 varies from truncated, differentially fucosylated to sialylated (NeuGc) complex types: Man3GlcNAc2; GlcNAc2Man3GlcNAc2(Fuc); Gal1GlcNAc1Man3GlcNAc2; GlcNAc2Man3GlcNAc2; GlcNAc1Man3GlcNAc2; GlcNAc1Man2GlcNAc2 and NeuGc1Gal1GlcNAc2Man3GlcNAc2.

Its subcellular location is the secreted. In terms of biological role, serves to link two monomer units of either IgM or IgA. In the case of IgM, the J chain-joined dimer is a nucleating unit for the IgM pentamer, and in the case of IgA it induces dimers and/or larger polymers. It also helps to bind these immunoglobulins to secretory component. The chain is Immunoglobulin J chain (JCHAIN) from Equus asinus (Donkey).